A 474-amino-acid chain; its full sequence is Microtubule protein alp7 (474 aa).

The segment covering 1–20 (MSDIVSSSTDYSRRSPSSSS) has biased composition (low complexity). 3 disordered regions span residues 1 to 79 (MSDI…DTLN), 93 to 114 (KSFD…LSQH), and 164 to 223 (SLQT…NSTQ). S17 carries the post-translational modification Phosphoserine. Residues 25-36 (ETDHTGFHEKRQ) are compositionally biased toward basic and acidic residues. Residues 66 to 76 (SKPNPQLNLKD) are compositionally biased toward polar residues. 2 stretches are compositionally biased toward polar residues: residues 177-189 (SNGS…NTAP) and 201-223 (RNSA…NSTQ). Coiled coils occupy residues 219 to 273 (INST…QLRS) and 367 to 471 (KISN…LNLE).

Interacts with alp14.

Its subcellular location is the nucleus. It localises to the cytoplasm. It is found in the cytoskeleton. The protein resides in the spindle. The protein localises to the chromosome. Its subcellular location is the centromere. It localises to the kinetochore. Its function is as follows. Required for bipolar spindle formation and proper chromosome segregation. Has an indirect role in connecting the kinetochores and the plus end of pole to chromosome microtubules by targeting alp14 to the spindle pole body. Involved in the emergence of large microtubule organizing centers (MTOC) in interphase cells. Attaches to the minus ends of microtubules and associates with the sites of microtubule attachment on the nuclear envelope. This leads to the stabilization of the microtubule bundles. This is Microtubule protein alp7 (alp7) from Schizosaccharomyces pombe (strain 972 / ATCC 24843) (Fission yeast).